Here is a 245-residue protein sequence, read N- to C-terminus: Protein DEHYDRATION-INDUCED 19 homolog 4 (245 aa).

It belongs to the Di19 family.

The sequence is that of Protein DEHYDRATION-INDUCED 19 homolog 4 (DI19-4) from Oryza sativa subsp. japonica (Rice).